The following is a 231-amino-acid chain: Large ribosomal subunit protein uL1 (231 aa).

It belongs to the universal ribosomal protein uL1 family. In terms of assembly, part of the 50S ribosomal subunit.

Its function is as follows. Binds directly to 23S rRNA. The L1 stalk is quite mobile in the ribosome, and is involved in E site tRNA release. Protein L1 is also a translational repressor protein, it controls the translation of the L11 operon by binding to its mRNA. This is Large ribosomal subunit protein uL1 from Thiobacillus denitrificans (strain ATCC 25259 / T1).